Here is a 352-residue protein sequence, read N- to C-terminus: Holliday junction branch migration complex subunit RuvB (352 aa).

The segment at 13–201 (FSFRKKELRL…FGISQKIEFY (189 aa)) is large ATPase domain (RuvB-L). Residues arginine 41, glycine 82, lysine 85, threonine 86, threonine 87, 148–150 (EDF), arginine 191, tyrosine 201, and arginine 238 contribute to the ATP site. Threonine 86 provides a ligand contact to Mg(2+). The tract at residues 202 to 273 (TCDELKQIIV…LIKKALNSYQ (72 aa)) is small ATPAse domain (RuvB-S). The head domain (RuvB-H) stretch occupies residues 276–352 (EKGLDSLDRH…KYIDSKDDNF (77 aa)). Positions 330 and 335 each coordinate DNA.

Belongs to the RuvB family. Homohexamer. Forms an RuvA(8)-RuvB(12)-Holliday junction (HJ) complex. HJ DNA is sandwiched between 2 RuvA tetramers; dsDNA enters through RuvA and exits via RuvB. An RuvB hexamer assembles on each DNA strand where it exits the tetramer. Each RuvB hexamer is contacted by two RuvA subunits (via domain III) on 2 adjacent RuvB subunits; this complex drives branch migration. In the full resolvosome a probable DNA-RuvA(4)-RuvB(12)-RuvC(2) complex forms which resolves the HJ.

The protein resides in the cytoplasm. The catalysed reaction is ATP + H2O = ADP + phosphate + H(+). The RuvA-RuvB-RuvC complex processes Holliday junction (HJ) DNA during genetic recombination and DNA repair, while the RuvA-RuvB complex plays an important role in the rescue of blocked DNA replication forks via replication fork reversal (RFR). RuvA specifically binds to HJ cruciform DNA, conferring on it an open structure. The RuvB hexamer acts as an ATP-dependent pump, pulling dsDNA into and through the RuvAB complex. RuvB forms 2 homohexamers on either side of HJ DNA bound by 1 or 2 RuvA tetramers; 4 subunits per hexamer contact DNA at a time. Coordinated motions by a converter formed by DNA-disengaged RuvB subunits stimulates ATP hydrolysis and nucleotide exchange. Immobilization of the converter enables RuvB to convert the ATP-contained energy into a lever motion, pulling 2 nucleotides of DNA out of the RuvA tetramer per ATP hydrolyzed, thus driving DNA branch migration. The RuvB motors rotate together with the DNA substrate, which together with the progressing nucleotide cycle form the mechanistic basis for DNA recombination by continuous HJ branch migration. Branch migration allows RuvC to scan DNA until it finds its consensus sequence, where it cleaves and resolves cruciform DNA. This Prochlorococcus marinus (strain AS9601) protein is Holliday junction branch migration complex subunit RuvB.